Consider the following 83-residue polypeptide: Toxin TdNa3 (83 aa).

Residues 1-20 (MKGMIMLISCLMLIDVVVES) form the signal peptide. An LCN-type CS-alpha/beta domain is found at 21 to 82 (KNGYIIEPKG…IFDYYNNKCG (62 aa)). Cystine bridges form between cysteine 31–cysteine 81, cysteine 35–cysteine 57, cysteine 43–cysteine 62, and cysteine 47–cysteine 64. Cysteine amide is present on cysteine 81.

Belongs to the long (4 C-C) scorpion toxin superfamily. Sodium channel inhibitor family. Beta subfamily. Expressed by the venom gland.

It localises to the secreted. In terms of biological role, inhibits the sodium currents (Nav) in an apparent irreversible manner. Produces small depolarization and induces repetitive firing in squid axons. Is specific for arthropods (crickets, triatomides, crabs and squids), but is non-toxic to mice. This is Toxin TdNa3 from Tityus discrepans (Venezuelan scorpion).